The sequence spans 476 residues: 3-isopropylmalate dehydratase large subunit (476 aa).

[4Fe-4S] cluster-binding residues include C353, C413, and C416.

The protein belongs to the aconitase/IPM isomerase family. LeuC type 1 subfamily. In terms of assembly, heterodimer of LeuC and LeuD. It depends on [4Fe-4S] cluster as a cofactor.

It catalyses the reaction (2R,3S)-3-isopropylmalate = (2S)-2-isopropylmalate. Its pathway is amino-acid biosynthesis; L-leucine biosynthesis; L-leucine from 3-methyl-2-oxobutanoate: step 2/4. Its function is as follows. Catalyzes the isomerization between 2-isopropylmalate and 3-isopropylmalate, via the formation of 2-isopropylmaleate. This Yersinia enterocolitica serotype O:8 / biotype 1B (strain NCTC 13174 / 8081) protein is 3-isopropylmalate dehydratase large subunit.